A 96-amino-acid polypeptide reads, in one-letter code: Muconolactone Delta-isomerase 2 (96 aa).

This sequence belongs to the muconolactone Delta-isomerase family. Homodecamer.

It catalyses the reaction (S)-muconolactone = (4,5-dihydro-5-oxofuran-2-yl)-acetate. It functions in the pathway aromatic compound metabolism; beta-ketoadipate pathway; 5-oxo-4,5-dihydro-2-furylacetate from catechol: step 3/3. The protein is Muconolactone Delta-isomerase 2 (catC2) of Acinetobacter lwoffii.